Reading from the N-terminus, the 596-residue chain is Jacalin-related lectin 46 (596 aa).

Positions 1–20 (MTERSEALGKDGNRRWDDKS) are disordered. 4 Jacalin-type lectin domains span residues 2–143 (TERS…YFTR), 146–291 (PTRI…YFTP), 294–439 (PTKS…HFYP), and 446–592 (AEKL…HVLP).

The protein belongs to the jacalin lectin family.

The protein is Jacalin-related lectin 46 (JAL46) of Arabidopsis thaliana (Mouse-ear cress).